A 61-amino-acid polypeptide reads, in one-letter code: Metallothionein-1 (61 aa).

The residue at position 1 (M1) is an N-acetylmethionine. The beta stretch occupies residues 1-29; sequence MDPNCSCSTGGSCTCTSSCACKNCKCTSC. A divalent metal cation-binding residues include C5, C7, C13, C15, C19, C21, C24, C26, C29, C33, C34, C36, C37, C41, C44, C48, C50, C57, C59, and C60. The tract at residues 30–61 is alpha; that stretch reads KKSCCSCCPVGCSKCAQGCVCKGAADKCTCCA.

This sequence belongs to the metallothionein superfamily. Type 1 family.

In terms of biological role, metallothioneins have a high content of cysteine residues that bind various heavy metals; these proteins are transcriptionally regulated by both heavy metals and glucocorticoids. In Mus musculus (Mouse), this protein is Metallothionein-1 (Mt1).